Reading from the N-terminus, the 396-residue chain is MQNMVILGATGSIGASTLNVVACNPEQYKVFALVANTNVAKMLEICIAHQPKIAHMVDAKAAQALKQQLPSHLKIEVTTGEDELLSLVSCSEVDTVMAAIVGAAGLPSTLAAVNAGKRVLLANKESLVMSGQLFIEAMQNSGAQVLPVDSEHNAIFQCLSERSQLEIGRCDLTGAGVSHILLTGSGGPFLTSDLSSLVNMTPDQACKHPNWSMGRKISVDSATMMNKGLEYIEARWLFNASSDQLKVVIHPQSVIHSMVQYRDGSVLAQLGNPDMRTPIAHCMSFPQRISSGVEPLDFFKVGQLSFLEPDFNRFPCLALAIEACKQGQEATTVLNAANEISVQAFLDGKIRFTDIAKINEQSLMNTATHPLNCIDDILALDFQSRQYTLNAITKLN.

Threonine 10, glycine 11, serine 12, isoleucine 13, asparagine 38, and asparagine 123 together coordinate NADPH. Residue lysine 124 participates in 1-deoxy-D-xylulose 5-phosphate binding. Glutamate 125 lines the NADPH pocket. Position 149 (aspartate 149) interacts with Mn(2+). The 1-deoxy-D-xylulose 5-phosphate site is built by serine 150, glutamate 151, serine 185, and histidine 208. Residue glutamate 151 participates in Mn(2+) binding. Position 214 (glycine 214) interacts with NADPH. Serine 221, asparagine 226, lysine 227, and glutamate 230 together coordinate 1-deoxy-D-xylulose 5-phosphate. Residue glutamate 230 participates in Mn(2+) binding.

It belongs to the DXR family. Mg(2+) is required as a cofactor. It depends on Mn(2+) as a cofactor.

It carries out the reaction 2-C-methyl-D-erythritol 4-phosphate + NADP(+) = 1-deoxy-D-xylulose 5-phosphate + NADPH + H(+). Its pathway is isoprenoid biosynthesis; isopentenyl diphosphate biosynthesis via DXP pathway; isopentenyl diphosphate from 1-deoxy-D-xylulose 5-phosphate: step 1/6. Its function is as follows. Catalyzes the NADPH-dependent rearrangement and reduction of 1-deoxy-D-xylulose-5-phosphate (DXP) to 2-C-methyl-D-erythritol 4-phosphate (MEP). This is 1-deoxy-D-xylulose 5-phosphate reductoisomerase from Shewanella pealeana (strain ATCC 700345 / ANG-SQ1).